Consider the following 825-residue polypeptide: Osmosensitive cation channel TMEM63C (825 aa).

Residues 1-50 (MAFESWPAGGVRPVEELDVRSFLMEENSTAERCYRSHSRSSVLQGLPFGG) are Extracellular-facing. Residues 51 to 75 (VPTVLAINVVLWLILLLIFSCLRKA) traverse the membrane as a helical segment. At 76 to 141 (AWDYGRLALL…KDEEIRSKCG (66 aa)) the chain is on the cytoplasmic side. The disordered stretch occupies residues 98–117 (EQSEKEKTPSDSSPSDSETK). Residues 142–174 (IDAVTYLSFQRHIILLMMVVCLLSLTIILPVNL) form a helical membrane-spanning segment. At 175–198 (SGNLLGDNPENFGRTTVVNVPAQN) the chain is on the extracellular side. A helical membrane pass occupies residues 199–223 (IFLWLHSIFALLYFVITVLCMAHHS). Residues 224 to 418 (SRLEYREDEK…IIWENLSVCG (195 aa)) lie on the Cytoplasmic side of the membrane. Residues 419–448 (PRWWLRCILLNILLFLLLFFLTTPAIIVNT) form a helical membrane-spanning segment. Residues 449 to 463 (MDKFNVTRPVESLRN) lie on the Extracellular side of the membrane. The helical transmembrane segment at 464–493 (PVITQFFPTLLLWAFSILLPFIVYYSSFFE) threads the bilayer. Residues 494 to 497 (YHWT) are Cytoplasmic-facing. Residues 498–534 (RSGENQVTMHKCFLLLVFMVIILPSLGLSSLNLFFRW) traverse the membrane as a helical segment. Over 535–557 (LFDVRFLDETDVKFQCVFLPDNG) the chain is Extracellular. The chain crosses the membrane as a helical span at residues 558–590 (AFFVNYVITSSLIGTAMELLRIPALLVYSLRLC). Over 591–610 (FAKSKAECIHVKISQAYEFQ) the chain is Cytoplasmic. A helical membrane pass occupies residues 611-629 (FGLEYAWTMCIFSVSMTYS). Residues 630 to 632 (ITC) are Extracellular-facing. Residues 633-657 (PVIVPFGLLYLVLKHMVDRYNIYYA) traverse the membrane as a helical segment. The Cytoplasmic portion of the chain corresponds to 658-664 (YTPTKLN). Residues 665 to 693 (QRIHAAAISQVVVAPILCMFWLLFFSVLR) traverse the membrane as a helical segment. Over 694-698 (LGPVQ) the chain is Extracellular. The chain crosses the membrane as a helical span at residues 699-719 (PITLFTFITLLCSIAFSCFGF). Topologically, residues 720–825 (CMKKLRADRS…LLMDSPVAFQ (106 aa)) are cytoplasmic. Residues 777–825 (SPAHQSYGTMVNSQSSVRDAEEDEEKDLEETLETELKDDLLMDSPVAFQ) are disordered. Polar residues predominate over residues 779-793 (AHQSYGTMVNSQSSV). The segment covering 796–809 (AEEDEEKDLEETLE) has biased composition (acidic residues).

Belongs to the CSC1 (TC 1.A.17) family. In terms of assembly, monomer.

The protein localises to the endoplasmic reticulum membrane. Its subcellular location is the cell membrane. It catalyses the reaction Ca(2+)(in) = Ca(2+)(out). Its function is as follows. Acts as an osmosensitive cation channel preferentially activated upon hypotonic stress. In contrast to tmem63b, does not show phospholipid scramblase activity. Required for the functional integrity of the kidney glomerular filtration barrier. The sequence is that of Osmosensitive cation channel TMEM63C (tmem63c) from Danio rerio (Zebrafish).